The chain runs to 378 residues: Holliday junction branch migration complex subunit RuvB 1 (378 aa).

The span at 1-12 (MAIISSRDTGQN) shows a compositional bias: polar residues. Positions 1 to 62 (MAIISSRDTG…PGEAQEESLR (62 aa)) are disordered. The tract at residues 13–222 (AEGPKRRQQK…FGHVQRLRFY (210 aa)) is large ATPase domain (RuvB-L). ATP is bound by residues Leu-61, Arg-62, Gly-103, Lys-106, Thr-107, Thr-108, 169 to 171 (EDF), Arg-212, Tyr-222, and Arg-259. Thr-107 serves as a coordination point for Mg(2+). Residues 223 to 293 (EPHELVQIVL…VAAAALELFQ (71 aa)) are small ATPAse domain (RuvB-S). Positions 296–378 (PMGLDWIDRK…EAQSPLPLWS (83 aa)) are head domain (RuvB-H). DNA-binding residues include Arg-351 and Arg-356.

Belongs to the RuvB family. In terms of assembly, homohexamer. Forms an RuvA(8)-RuvB(12)-Holliday junction (HJ) complex. HJ DNA is sandwiched between 2 RuvA tetramers; dsDNA enters through RuvA and exits via RuvB. An RuvB hexamer assembles on each DNA strand where it exits the tetramer. Each RuvB hexamer is contacted by two RuvA subunits (via domain III) on 2 adjacent RuvB subunits; this complex drives branch migration. In the full resolvosome a probable DNA-RuvA(4)-RuvB(12)-RuvC(2) complex forms which resolves the HJ.

It is found in the cytoplasm. The catalysed reaction is ATP + H2O = ADP + phosphate + H(+). Its function is as follows. The RuvA-RuvB-RuvC complex processes Holliday junction (HJ) DNA during genetic recombination and DNA repair, while the RuvA-RuvB complex plays an important role in the rescue of blocked DNA replication forks via replication fork reversal (RFR). RuvA specifically binds to HJ cruciform DNA, conferring on it an open structure. The RuvB hexamer acts as an ATP-dependent pump, pulling dsDNA into and through the RuvAB complex. RuvB forms 2 homohexamers on either side of HJ DNA bound by 1 or 2 RuvA tetramers; 4 subunits per hexamer contact DNA at a time. Coordinated motions by a converter formed by DNA-disengaged RuvB subunits stimulates ATP hydrolysis and nucleotide exchange. Immobilization of the converter enables RuvB to convert the ATP-contained energy into a lever motion, pulling 2 nucleotides of DNA out of the RuvA tetramer per ATP hydrolyzed, thus driving DNA branch migration. The RuvB motors rotate together with the DNA substrate, which together with the progressing nucleotide cycle form the mechanistic basis for DNA recombination by continuous HJ branch migration. Branch migration allows RuvC to scan DNA until it finds its consensus sequence, where it cleaves and resolves cruciform DNA. This is Holliday junction branch migration complex subunit RuvB 1 from Synechococcus sp. (strain JA-3-3Ab) (Cyanobacteria bacterium Yellowstone A-Prime).